Here is an 885-residue protein sequence, read N- to C-terminus: Leucine--tRNA ligase (885 aa).

The short motif at 48-58 (PYPSGKLHMGH) is the 'HIGH' region element. Residues 639–643 (TMSKS) carry the 'KMSKS' region motif. An ATP-binding site is contributed by Lys-642.

The protein belongs to the class-I aminoacyl-tRNA synthetase family.

Its subcellular location is the cytoplasm. It carries out the reaction tRNA(Leu) + L-leucine + ATP = L-leucyl-tRNA(Leu) + AMP + diphosphate. The polypeptide is Leucine--tRNA ligase (Bordetella petrii (strain ATCC BAA-461 / DSM 12804 / CCUG 43448)).